The chain runs to 65 residues: Large ribosomal subunit protein uL29 (65 aa).

The protein belongs to the universal ribosomal protein uL29 family.

The protein is Large ribosomal subunit protein uL29 (rpmC) of Borreliella burgdorferi (strain ATCC 35210 / DSM 4680 / CIP 102532 / B31) (Borrelia burgdorferi).